Reading from the N-terminus, the 575-residue chain is Arginine--tRNA ligase (575 aa).

The 'HIGH' region motif lies at 131 to 141; that stretch reads ANPNGPLHIGH.

This sequence belongs to the class-I aminoacyl-tRNA synthetase family.

The protein localises to the cytoplasm. It carries out the reaction tRNA(Arg) + L-arginine + ATP = L-arginyl-tRNA(Arg) + AMP + diphosphate. The chain is Arginine--tRNA ligase from Methanobrevibacter smithii (strain ATCC 35061 / DSM 861 / OCM 144 / PS).